The sequence spans 210 residues: Cytochrome c4 (210 aa).

The signal sequence occupies residues 1–20; the sequence is MNKALVTLLLTLGITGLAHA. Heme c contacts are provided by Cys-34, Cys-37, His-38, Met-86, Cys-139, Cys-142, His-143, and Met-187.

Binds 2 heme c groups covalently per subunit.

The protein localises to the periplasm. In terms of biological role, diheme, high potential cytochrome c believed to be an intermediate electron donor to terminal oxidation systems. The sequence is that of Cytochrome c4 (cycA) from Azotobacter vinelandii.